Reading from the N-terminus, the 356-residue chain is Chorismate synthase (356 aa).

Arg-46 lines the NADP(+) pocket. FMN contacts are provided by residues 122–124 (RSS), 234–235 (NG), Gly-274, 289–293 (KPTPS), and Arg-315.

Belongs to the chorismate synthase family. As to quaternary structure, homotetramer. Requires FMNH2 as cofactor.

It catalyses the reaction 5-O-(1-carboxyvinyl)-3-phosphoshikimate = chorismate + phosphate. The protein operates within metabolic intermediate biosynthesis; chorismate biosynthesis; chorismate from D-erythrose 4-phosphate and phosphoenolpyruvate: step 7/7. Its function is as follows. Catalyzes the anti-1,4-elimination of the C-3 phosphate and the C-6 proR hydrogen from 5-enolpyruvylshikimate-3-phosphate (EPSP) to yield chorismate, which is the branch point compound that serves as the starting substrate for the three terminal pathways of aromatic amino acid biosynthesis. This reaction introduces a second double bond into the aromatic ring system. The chain is Chorismate synthase from Campylobacter fetus subsp. fetus (strain 82-40).